Reading from the N-terminus, the 465-residue chain is Chromosomal replication initiator protein DnaA (465 aa).

A domain I, interacts with DnaA modulators region spans residues 1-80 (MLWTDCLTRL…VEILVDSRPG (80 aa)). The segment at 80–127 (GAILSPAEQPATTTAALSSTPVVPQRVKKEVVEPAATQSNKILNSKKR) is domain II. Residues 128–345 (LLNPLFTFSL…GALNKVVAIA (218 aa)) are domain III, AAA+ region. ATP is bound by residues Gly173, Gly175, Lys176, and Thr177. A domain IV, binds dsDNA region spans residues 346 to 465 (RFKGSQIDLD…YKNLLRLLQS (120 aa)).

This sequence belongs to the DnaA family. Oligomerizes as a right-handed, spiral filament on DNA at oriC.

It localises to the cytoplasm. Its function is as follows. Plays an essential role in the initiation and regulation of chromosomal replication. ATP-DnaA binds to the origin of replication (oriC) to initiate formation of the DNA replication initiation complex once per cell cycle. Binds the DnaA box (a 9 base pair repeat at the origin) and separates the double-stranded (ds)DNA. Forms a right-handed helical filament on oriC DNA; dsDNA binds to the exterior of the filament while single-stranded (ss)DNA is stabiized in the filament's interior. The ATP-DnaA-oriC complex binds and stabilizes one strand of the AT-rich DNA unwinding element (DUE), permitting loading of DNA polymerase. After initiation quickly degrades to an ADP-DnaA complex that is not apt for DNA replication. Binds acidic phospholipids. This Acinetobacter baylyi (strain ATCC 33305 / BD413 / ADP1) protein is Chromosomal replication initiator protein DnaA.